A 257-amino-acid chain; its full sequence is Ethanolamine ammonia-lyase small subunit (257 aa).

3 residues coordinate adenosylcob(III)alamin: Val153, Glu174, and Cys203.

The protein belongs to the EutC family. The basic unit is a heterodimer which dimerizes to form tetramers. The heterotetramers trimerize; 6 large subunits form a core ring with 6 small subunits projecting outwards. Adenosylcob(III)alamin is required as a cofactor.

Its subcellular location is the bacterial microcompartment. The enzyme catalyses ethanolamine = acetaldehyde + NH4(+). It participates in amine and polyamine degradation; ethanolamine degradation. In terms of biological role, catalyzes the deamination of various vicinal amino-alcohols to oxo compounds. Allows this organism to utilize ethanolamine as the sole source of nitrogen and carbon in the presence of external vitamin B12. In Rhodococcus erythropolis (Arthrobacter picolinophilus), this protein is Ethanolamine ammonia-lyase small subunit.